A 739-amino-acid polypeptide reads, in one-letter code: Phosphoribosylformylglycinamidine synthase subunit PurL (739 aa).

Residue H54 is part of the active site. Residues Y57 and K96 each coordinate ATP. Residue E98 participates in Mg(2+) binding. Substrate is bound by residues 99-102 (SHNH) and R121. H100 (proton acceptor) is an active-site residue. Residue D122 coordinates Mg(2+). Position 245 (Q245) interacts with substrate. Residue D273 coordinates Mg(2+). 317 to 319 (ESQ) lines the substrate pocket. Positions 500 and 537 each coordinate ATP. N538 is a binding site for Mg(2+). S540 provides a ligand contact to substrate.

The protein belongs to the FGAMS family. In terms of assembly, monomer. Part of the FGAM synthase complex composed of 1 PurL, 1 PurQ and 2 PurS subunits.

It localises to the cytoplasm. It carries out the reaction N(2)-formyl-N(1)-(5-phospho-beta-D-ribosyl)glycinamide + L-glutamine + ATP + H2O = 2-formamido-N(1)-(5-O-phospho-beta-D-ribosyl)acetamidine + L-glutamate + ADP + phosphate + H(+). It participates in purine metabolism; IMP biosynthesis via de novo pathway; 5-amino-1-(5-phospho-D-ribosyl)imidazole from N(2)-formyl-N(1)-(5-phospho-D-ribosyl)glycinamide: step 1/2. Functionally, part of the phosphoribosylformylglycinamidine synthase complex involved in the purines biosynthetic pathway. Catalyzes the ATP-dependent conversion of formylglycinamide ribonucleotide (FGAR) and glutamine to yield formylglycinamidine ribonucleotide (FGAM) and glutamate. The FGAM synthase complex is composed of three subunits. PurQ produces an ammonia molecule by converting glutamine to glutamate. PurL transfers the ammonia molecule to FGAR to form FGAM in an ATP-dependent manner. PurS interacts with PurQ and PurL and is thought to assist in the transfer of the ammonia molecule from PurQ to PurL. The polypeptide is Phosphoribosylformylglycinamidine synthase subunit PurL (Bacillus mycoides (strain KBAB4) (Bacillus weihenstephanensis)).